Reading from the N-terminus, the 106-residue chain is Iron-sulfur cluster assembly protein CyaY (106 aa).

The protein belongs to the frataxin family. Interacts with IscS. Certain pairs of proteins can bind simultaneously to IscS; IscS-IscU-CyaY complexes can be isolated in vitro, but (IscS-TusA-CyaY) complexes cannot.

Involved in iron-sulfur (Fe-S) cluster assembly. May act as a regulator of Fe-S biogenesis. The chain is Iron-sulfur cluster assembly protein CyaY from Escherichia coli O157:H7.